Here is a 282-residue protein sequence, read N- to C-terminus: E3 ubiquitin-protein ligase RNF217 (282 aa).

Positions methionine 1 to tyrosine 218 are TRIAD supradomain. The Zn(2+) site is built by cysteine 3, cysteine 6, cysteine 23, cysteine 26, cysteine 123, cysteine 126, histidine 131, cysteine 136, cysteine 163, and cysteine 166. The RING-type 1 zinc finger occupies cysteine 3–cysteine 49. The segment at isoleucine 68–cysteine 136 adopts an IBR-type zinc-finger fold. An RING-type 2; atypical zinc finger spans residues cysteine 163–cysteine 192. The active site involves cysteine 176. Residues cysteine 181, cysteine 184, cysteine 189, cysteine 192, histidine 205, and cysteine 214 each contribute to the Zn(2+) site. A helical transmembrane segment spans residues leucine 243–leucine 263.

Belongs to the RBR family. RNF217 subfamily.

It is found in the cytoplasm. Its subcellular location is the membrane. The catalysed reaction is [E2 ubiquitin-conjugating enzyme]-S-ubiquitinyl-L-cysteine + [acceptor protein]-L-lysine = [E2 ubiquitin-conjugating enzyme]-L-cysteine + [acceptor protein]-N(6)-ubiquitinyl-L-lysine.. It participates in protein modification; protein ubiquitination. Functionally, E3 ubiquitin-protein ligase which accepts ubiquitin from E2 ubiquitin-conjugating enzymes in the form of a thioester and then directly transfers the ubiquitin to targeted substrates. Mediates the degradation of the iron exporter ferroportin/SLC40A1 and thus regulates iron homeostasis. The sequence is that of E3 ubiquitin-protein ligase RNF217 (rnf217) from Xenopus laevis (African clawed frog).